The sequence spans 397 residues: MQFKRLSDLIARGELQGKRVFIRADLNVPQDSTGNITEDTRIRASVPAIQQALQAGAAVMVTSHLGRPVEGEFKPADTLAPIAQRLSELLGQPVALKQNWVDGVDVAPGQVVLLENCRVNKGEKKNDDALAQKIAALCDVYVNDAFGTAHRAEATTHGIAKYAPVACAGPLLAAELDALGKALGEPASPLVAIVAGSKVSTKLTILKTLADKVDNLIVGGGIANTFMLAAGLKIGKSLAEADLLGDAKAIIDMMAKRGASVPIPVDVVCAKEFAPTAAATVKDVADVADDDMILDIGPKTAELLARQIAQAGTIVWNGPVGVFEFDQFANGTKTLAYAIAESKGFSVAGGGDTLAAIAKYDIGDKIDYISTGGGAFLEFLEGKTLPAVAILEERAQG.

Substrate is bound by residues 25-27, Arg41, 64-67, Arg118, and Arg151; these read DLN and HLGR. Residues Lys202, Glu324, and 350 to 353 contribute to the ATP site; that span reads GGDT.

It belongs to the phosphoglycerate kinase family. In terms of assembly, monomer.

Its subcellular location is the cytoplasm. It catalyses the reaction (2R)-3-phosphoglycerate + ATP = (2R)-3-phospho-glyceroyl phosphate + ADP. It participates in carbohydrate degradation; glycolysis; pyruvate from D-glyceraldehyde 3-phosphate: step 2/5. This Janthinobacterium sp. (strain Marseille) (Minibacterium massiliensis) protein is Phosphoglycerate kinase.